The chain runs to 204 residues: MDLTIVGSDNTLPVSDVVFGREFSEALVHQVVVAYRNTARSGTKAQKSRSQVSGTTKKSKKQKGGGARHGALTAPIFVGGGVAFAAKPRSFSQKVNRKQYRSAICSIFSELNRQGRLKVVDAFDVEVSKTKVFAEKIKSLEVVGVGSSLLIVSDEISECLSLSSRNLPCVDVRSVQALDPVALVGSDVVVLTVGAVKKIEEWLV.

A compositionally biased stretch (polar residues) spans 42-52 (GTKAQKSRSQV). The disordered stretch occupies residues 42–70 (GTKAQKSRSQVSGTTKKSKKQKGGGARHG).

This sequence belongs to the universal ribosomal protein uL4 family. As to quaternary structure, part of the 50S ribosomal subunit.

Functionally, one of the primary rRNA binding proteins, this protein initially binds near the 5'-end of the 23S rRNA. It is important during the early stages of 50S assembly. It makes multiple contacts with different domains of the 23S rRNA in the assembled 50S subunit and ribosome. In terms of biological role, forms part of the polypeptide exit tunnel. This chain is Large ribosomal subunit protein uL4, found in Xylella fastidiosa (strain M12).